The following is a 258-amino-acid chain: Phosphoadenosine 5'-phosphosulfate reductase (258 aa).

Cys244 serves as the catalytic Nucleophile; cysteine thiosulfonate intermediate.

It belongs to the PAPS reductase family. CysH subfamily.

It localises to the cytoplasm. The enzyme catalyses [thioredoxin]-disulfide + sulfite + adenosine 3',5'-bisphosphate + 2 H(+) = [thioredoxin]-dithiol + 3'-phosphoadenylyl sulfate. It participates in sulfur metabolism; hydrogen sulfide biosynthesis; sulfite from sulfate: step 3/3. Catalyzes the formation of sulfite from phosphoadenosine 5'-phosphosulfate (PAPS) using thioredoxin as an electron donor. This is Phosphoadenosine 5'-phosphosulfate reductase from Vibrio vulnificus (strain YJ016).